The following is a 210-amino-acid chain: Synaptosomal-associated protein 23 (210 aa).

Methionine 1 carries the N-acetylmethionine modification. Phosphoserine is present on residues serine 5, serine 20, serine 23, and serine 34. One can recognise a t-SNARE coiled-coil homology 1 domain in the interval histidine 14–leucine 76. Positions serine 23 to leucine 76 form a coiled coil. S-palmitoyl cysteine attachment occurs at residues cysteine 79, cysteine 80, cysteine 83, cysteine 85, and cysteine 87. The tract at residues glycine 104–serine 135 is disordered. A compositionally biased stretch (polar residues) spans asparagine 109–alanine 133. Phosphoserine occurs at positions 110 and 160. The region spanning aspartate 145–leucine 207 is the t-SNARE coiled-coil homology 2 domain.

Belongs to the SNAP-25 family. Homotetramer (via coiled-coil domain), also forms heterotetramers with STX4 and VAMP3. Found in a complex with VAMP8 and STX1A. Found in a complex with VAMP8 and STX4 in pancreas. Interacts simultaneously with SNAPIN and SYN4. Interacts with STX1A. Interacts with STX12. Interacts tightly to multiple syntaxins and synaptobrevins/VAMPs. Interacts with ZDHHC13 (via ANK repeats). Interacts with ZDHHC17 (via ANK repeats). Post-translationally, (Microbial infection) Targeted and hydrolyzed by C.botulinum neurotoxin type A (BoNT/A, botA) which hydrolyzes the 202-Thr-|-Arg-203 bond; the in vitro reaction is not highly efficient. (Microbial infection) Targeted and hydrolyzed by C.botulinum neurotoxin type E (BoNT/E) which hydrolyzes the 185-Arg-|-Ile-186 bond; the in vitro reaction is more efficient than that of BoNT/A. Expressed in non-neuronal tissues.

It is found in the cell membrane. The protein resides in the synapse. It localises to the synaptosome. Its function is as follows. Essential component of the high affinity receptor for the general membrane fusion machinery and an important regulator of transport vesicle docking and fusion. The chain is Synaptosomal-associated protein 23 (Snap23) from Mus musculus (Mouse).